Here is a 437-residue protein sequence, read N- to C-terminus: Ribosomal protein uS12 methylthiotransferase RimO (437 aa).

One can recognise an MTTase N-terminal domain in the interval alanine 3 to threonine 114. Residues cysteine 12, cysteine 48, cysteine 77, cysteine 152, cysteine 156, and cysteine 159 each contribute to the [4Fe-4S] cluster site. The Radical SAM core domain maps to threonine 138 to arginine 367. Residues alanine 370–glutamine 436 form the TRAM domain.

This sequence belongs to the methylthiotransferase family. RimO subfamily. It depends on [4Fe-4S] cluster as a cofactor.

It is found in the cytoplasm. It carries out the reaction L-aspartate(89)-[ribosomal protein uS12]-hydrogen + (sulfur carrier)-SH + AH2 + 2 S-adenosyl-L-methionine = 3-methylsulfanyl-L-aspartate(89)-[ribosomal protein uS12]-hydrogen + (sulfur carrier)-H + 5'-deoxyadenosine + L-methionine + A + S-adenosyl-L-homocysteine + 2 H(+). Catalyzes the methylthiolation of an aspartic acid residue of ribosomal protein uS12. The chain is Ribosomal protein uS12 methylthiotransferase RimO from Gloeobacter violaceus (strain ATCC 29082 / PCC 7421).